A 635-amino-acid polypeptide reads, in one-letter code: Chaperone protein HtpG (635 aa).

Residues 1 to 337 (MELKMHNVQE…SPDLPLNISR (337 aa)) are a; substrate-binding. The interval 338–556 (ETLQNNRVVE…EGAMDLRMER (219 aa)) is b. The segment at 557-635 (FLREQKQLNY…LNNLLGKISV (79 aa)) is c.

The protein belongs to the heat shock protein 90 family. Homodimer.

It is found in the cytoplasm. Molecular chaperone. Has ATPase activity. The chain is Chaperone protein HtpG from Wolbachia pipientis wMel.